Consider the following 443-residue polypeptide: Thymidine phosphorylase (443 aa).

This sequence belongs to the thymidine/pyrimidine-nucleoside phosphorylase family. In terms of assembly, homodimer.

The catalysed reaction is thymidine + phosphate = 2-deoxy-alpha-D-ribose 1-phosphate + thymine. It functions in the pathway pyrimidine metabolism; dTMP biosynthesis via salvage pathway; dTMP from thymine: step 1/2. Functionally, the enzymes which catalyze the reversible phosphorolysis of pyrimidine nucleosides are involved in the degradation of these compounds and in their utilization as carbon and energy sources, or in the rescue of pyrimidine bases for nucleotide synthesis. The protein is Thymidine phosphorylase of Shewanella sediminis (strain HAW-EB3).